The primary structure comprises 181 residues: MTMELESQEVVVETTTAAAAARAASAAHVRTTVALRLLAFAASLAAAVVVATNRQERWGITVTFKMFAVWEAFVAINFACAAYALLTAVFVKKLVSKHWLHHMDQFTVNLQAASTAGAGAVGSVAMWGNEPSGWYAVCRLYRLYCDRGAVSLALAFVAFVAFGVASSLSRYPRAPPPPAPR.

The Cytoplasmic portion of the chain corresponds to 1 to 30 (MTMELESQEVVVETTTAAAAARAASAAHVR). A helical transmembrane segment spans residues 31–51 (TTVALRLLAFAASLAAAVVVA). At 52-65 (TNRQERWGITVTFK) the chain is on the extracellular side. A helical transmembrane segment spans residues 66–86 (MFAVWEAFVAINFACAAYALL). The Cytoplasmic segment spans residues 87–107 (TAVFVKKLVSKHWLHHMDQFT). Residues 108 to 128 (VNLQAASTAGAGAVGSVAMWG) form a helical membrane-spanning segment. Residues 129–147 (NEPSGWYAVCRLYRLYCDR) lie on the Extracellular side of the membrane. A helical transmembrane segment spans residues 148–168 (GAVSLALAFVAFVAFGVASSL). The Cytoplasmic segment spans residues 169–181 (SRYPRAPPPPAPR).

The protein belongs to the Casparian strip membrane proteins (CASP) family. As to quaternary structure, homodimer and heterodimers.

It is found in the cell membrane. This Sorghum bicolor (Sorghum) protein is CASP-like protein UU-1.